The following is a 375-amino-acid chain: MVSPVVHRHAAGGGSGGDDDDQACMYALELLGGSVVSMTLKAAIELGLVDELLAAAGAAVTAEELAARLRLPAAVAAAAAVDRMLRLLASYGVVRCATEAGPDGKARRSYAAAPVCKWLAAGSSSGEGSMAPLGLLNLDKVFMENWYYLKEAVSEGGTAFDKAYGTSLFQYLGQDGNEPSNTLFNQAMASHSVVITNKLLQFFRGFDAGAGVDVLVDVGGGVGATLRMITARHPHLRGVNYDLPHVIAQAPPVEGVEHIGGSMFDHVPSGSAILLKWILHLWGDEECVKILKNCYKALPAKGKVILVEYVLPASPEATLAAQEAFRLDVMMLNRLAGGKERTQQEFTDLAVDAGFSGDCKPTYIFTNVWALEFTK.

Position 136–142 (136–142 (LNLDKVF)) interacts with substrate. The tract at residues 168-188 (LFQYLGQDGNEPSNTLFNQAM) is substrate binding. S-adenosyl-L-methionine is bound by residues Gly219, Asp242, Met263, and Lys276. His280 serves as the catalytic Proton acceptor.

The protein belongs to the class I-like SAM-binding methyltransferase superfamily. Cation-independent O-methyltransferase family. COMT subfamily.

It catalyses the reaction (2S)-naringenin + S-adenosyl-L-methionine = (2S)-sakuranetin + S-adenosyl-L-homocysteine + H(+). Its function is as follows. S-adenosyl-L-methionine-dependent methyltransferase involved in the biosynthesis of the sakuranetin, an inducible defense mechanism of O.sativa against pathogen attack. The polypeptide is Naringenin 7-O-methyltransferase (Oryza sativa subsp. japonica (Rice)).